The sequence spans 345 residues: Diacylglycerol O-acyltransferase 1 (345 aa).

Topologically, residues 1-49 are cytoplasmic; that stretch reads MSEETSIPGIIASTPPISKDSRRNVSHWLQALAVFLHSVSLTLTASWYT. The helical transmembrane segment at 50 to 70 threads the bilayer; the sequence is VLWAFLPFWPFLIVYLIWLIY. The Lumenal portion of the chain corresponds to 71–113; sequence DDGFVTGKDRQKRWLRNAPPYRWFCHYFPIRLHKTTELDSEKN. A helical membrane pass occupies residues 114–134; sequence YIFGYHPHGIISLGAFGGFAS. Topologically, residues 135–141 are cytoplasmic; that stretch reads EGADFSK. Residues 142–162 form a helical membrane-spanning segment; that stretch reads LFPGINVSVLTLNSNFYVPVY. Topologically, residues 163–216 are lumenal; sequence RDYLMALNINSVSKKSCVSILSRKPGDSVLIVIGGAQESLLSRPGQNNLVLKKR. The chain crosses the membrane as a helical span at residues 217 to 237; that stretch reads FGFVKLAFLTGSSLVPCFAFG. Over 238 to 345 the chain is Cytoplasmic; it reads ESDIFEQVDN…NRISELKLSA (108 aa).

The protein belongs to the diacylglycerol acyltransferase family.

The protein resides in the lipid droplet. It localises to the endoplasmic reticulum membrane. It carries out the reaction an acyl-CoA + a 1,2-diacyl-sn-glycerol = a triacyl-sn-glycerol + CoA. It catalyses the reaction a 2-acylglycerol + an acyl-CoA = a 1,2-diacyl-sn-glycerol + CoA. It participates in glycerolipid metabolism; triacylglycerol biosynthesis. Catalyzes the terminal and only committed step in triacylglycerol (TAG) synthesis by using diacylglycerol (DAG) and fatty acyl-CoA as substrates. Required for storage lipid synthesis. Major DAG esterifying enzyme in stationary phase when TAG production is particularly active. Involved in lipid particle synthesis from the endoplasmic reticulum, promoting localized TAG production at discrete ER subdomains. This Schizosaccharomyces pombe (strain 972 / ATCC 24843) (Fission yeast) protein is Diacylglycerol O-acyltransferase 1 (dga1).